We begin with the raw amino-acid sequence, 245 residues long: 2,3-bisphosphoglycerate-dependent phosphoglycerate mutase (245 aa).

Residues 8–15, 21–22, Arg-60, 87–90, Lys-98, 114–115, and 183–184 contribute to the substrate site; these read RHGQSLWN, TG, ERHY, RR, and GN. The active-site Tele-phosphohistidine intermediate is the His-9. The Proton donor/acceptor role is filled by Glu-87.

Belongs to the phosphoglycerate mutase family. BPG-dependent PGAM subfamily.

It carries out the reaction (2R)-2-phosphoglycerate = (2R)-3-phosphoglycerate. Its pathway is carbohydrate degradation; glycolysis; pyruvate from D-glyceraldehyde 3-phosphate: step 3/5. In terms of biological role, catalyzes the interconversion of 2-phosphoglycerate and 3-phosphoglycerate. In Bacillus thuringiensis (strain Al Hakam), this protein is 2,3-bisphosphoglycerate-dependent phosphoglycerate mutase.